A 376-amino-acid polypeptide reads, in one-letter code: MRLLVFLILLIFVNFSFANVRPNGRRFSESQYRTAFTEWTLKFNRQYSSSEFSNRYSIFKSNMDYVDNWNSKGDSQTVLGLNNFADITNEEYRKTYLGTRVNAHSYNGYDGREVLNVEDLQTNPKSIDWRTKNAVTPIKDQGQCGSCWSFSTTGSTEGAHALKTKKLVSLSEQNLVDCSGPEENFGCDGGLMNNAFDYIIKNKGIDTESSYPYTAETGSTCLFNKSDIGATIKGYVNITAGSEISLENGAQHGPVSVAIDASHNSFQLYTSGIYYEPKCSPTELDHGVLVVGYGVQGKDDEGPVLNRKQTIVIHKNEDNKVESSDDSSDSVRPKANNYWIVKNSWGTSWGIKGYILMSKDRKNNCGIASVSSYPLA.

A signal peptide spans 1–18 (MRLLVFLILLIFVNFSFA). A propeptide spans 19-122 (NVRPNGRRFS…EVLNVEDLQT (104 aa)) (activation peptide). Cystine bridges form between cysteine 144–cysteine 187, cysteine 178–cysteine 221, and cysteine 279–cysteine 365. Residue cysteine 147 is part of the active site. Active-site residues include histidine 286 and asparagine 343.

Belongs to the peptidase C1 family.

It is found in the lysosome. In terms of biological role, cysteine proteinases 1 and 2 are believed to participate in the breakdown of protein during differentiation of Dictyostelium as a response to starvation. The polypeptide is Cysteine proteinase 2 (cprB) (Dictyostelium discoideum (Social amoeba)).